The sequence spans 434 residues: RNA-binding protein SRO9 (434 aa).

Over residues 1–13 the composition is skewed to low complexity; that stretch reads MSAETAAANTATA. Residues 1-243 are disordered; it reads MSAETAAANT…FHHNQQHPQQ (243 aa). The segment covering 26–41 has biased composition (polar residues); it reads SKQVNLTPAPLPTSSP. S55 carries the post-translational modification Phosphoserine. Positions 93 to 124 are enriched in low complexity; sequence KRSGSKNGASNGNSNKSKNNKTAASSTSSSNA. Residues 125–140 are compositionally biased toward basic residues; the sequence is NRKKKHHQHNAKKQQQ. S148 bears the Phosphoserine mark. K156 participates in a covalent cross-link: Glycyl lysine isopeptide (Lys-Gly) (interchain with G-Cter in ubiquitin). The segment covering 158–167 has biased composition (polar residues); sequence ATSQENGQST. The segment covering 173-195 has biased composition (basic residues); it reads PHHRNHHHSHHHNSNGPQRRKFH. A compositionally biased stretch (polar residues) spans 196 to 208; sequence NSNNAGMPQNQGF. Over residues 218–227 the composition is skewed to low complexity; that stretch reads RNARNNNNNR. A compositionally biased stretch (basic residues) spans 228-238; it reads SKYHNHFHHNQ. In terms of domain architecture, HTH La-type RNA-binding spans 255-351; that stretch reads VQPVLMAINN…KEGDNVTGEA (97 aa). Glycyl lysine isopeptide (Lys-Gly) (interchain with G-Cter in ubiquitin) cross-links involve residues K301, K342, and K352. The segment at 396–434 is disordered; that stretch reads SLPPVPQQEEESSTELASQEQETKEDSAPVAAGESESSL. S422 is modified (phosphoserine).

In terms of assembly, interacts with HAP1. Component of the HMC including HAP1, SRO9 and YDJ1.

It is found in the cytoplasm. Its function is as follows. May overlap in function with tropomyosin and may be involved in organization of actin filaments. Acts as a multicopy suppressor of RHO3 mutation. RNA-binding protein which may modulate mRNA translation. Involved in heme regulation of HAP1, as a component of the high-molecular-weight complex (HMC). In Saccharomyces cerevisiae (strain ATCC 204508 / S288c) (Baker's yeast), this protein is RNA-binding protein SRO9 (SRO9).